Reading from the N-terminus, the 319-residue chain is Probable cell division protein WhiA (319 aa).

A DNA-binding region (H-T-H motif) is located at residues 278–311 (SLKELGQMLNPPVGKSGVNHRLRRLESLAEAFSR).

Belongs to the WhiA family.

Involved in cell division and chromosome segregation. The sequence is that of Probable cell division protein WhiA from Heliobacterium modesticaldum (strain ATCC 51547 / Ice1).